A 472-amino-acid polypeptide reads, in one-letter code: GTPase Der (472 aa).

2 EngA-type G domains span residues 3-166 and 178-351; these read AVIA…PPAE and IPVA…AAAH. Residues 9 to 16, 56 to 60, 118 to 121, 184 to 191, 231 to 235, and 296 to 299 contribute to the GTP site; these read GRPNVGKS, DTGGM, NKTD, DTAGV, and NKWD. Positions 352 to 436 constitute a KH-like domain; sequence RDLATPELND…PVRIECRASD (85 aa). Residues 434-472 are disordered; it reads ASDNPFADKPNQLTERQRRRRQRVIHHAKKREKKRKRRR. Positions 450-472 are enriched in basic residues; the sequence is QRRRRQRVIHHAKKREKKRKRRR.

The protein belongs to the TRAFAC class TrmE-Era-EngA-EngB-Septin-like GTPase superfamily. EngA (Der) GTPase family. Associates with the 50S ribosomal subunit.

Its function is as follows. GTPase that plays an essential role in the late steps of ribosome biogenesis. The chain is GTPase Der from Halorhodospira halophila (strain DSM 244 / SL1) (Ectothiorhodospira halophila (strain DSM 244 / SL1)).